We begin with the raw amino-acid sequence, 250 residues long: UPF0758 protein tlr1707 (250 aa).

The region spanning 116–239 (TIIDSPALAA…YQSLREITPL (124 aa)) is the MPN domain. The Zn(2+) site is built by His188, His190, and Asp201. The short motif at 188 to 201 (HNHPSGNLSPSQAD) is the JAMM motif element.

This sequence belongs to the UPF0758 family.

The protein is UPF0758 protein tlr1707 of Thermosynechococcus vestitus (strain NIES-2133 / IAM M-273 / BP-1).